The following is a 513-amino-acid chain: Bifunctional purine biosynthesis protein PurH (513 aa).

The MGS-like domain maps to 1-146 (MPRFALLSVS…KNHAHLTILT (146 aa)).

The protein belongs to the PurH family.

The catalysed reaction is (6R)-10-formyltetrahydrofolate + 5-amino-1-(5-phospho-beta-D-ribosyl)imidazole-4-carboxamide = 5-formamido-1-(5-phospho-D-ribosyl)imidazole-4-carboxamide + (6S)-5,6,7,8-tetrahydrofolate. It carries out the reaction IMP + H2O = 5-formamido-1-(5-phospho-D-ribosyl)imidazole-4-carboxamide. It functions in the pathway purine metabolism; IMP biosynthesis via de novo pathway; 5-formamido-1-(5-phospho-D-ribosyl)imidazole-4-carboxamide from 5-amino-1-(5-phospho-D-ribosyl)imidazole-4-carboxamide (10-formyl THF route): step 1/1. It participates in purine metabolism; IMP biosynthesis via de novo pathway; IMP from 5-formamido-1-(5-phospho-D-ribosyl)imidazole-4-carboxamide: step 1/1. The chain is Bifunctional purine biosynthesis protein PurH from Synechococcus elongatus (strain ATCC 33912 / PCC 7942 / FACHB-805) (Anacystis nidulans R2).